The chain runs to 702 residues: Archaeal Lon protease (702 aa).

A disordered region spans residues 1 to 63 (MSNESTNDAP…VGVEGDVSID (63 aa)). The Cytoplasmic portion of the chain corresponds to 1-183 (MSNESTNDAP…EARKRNQMRS (183 aa)). Acidic residues predominate over residues 10-48 (PPDDDPDDPEPSVDHDDTDGLQDDPADSVDDAGEVDDLE). 117-124 (GSPGTGKS) contacts ATP. Residues 184–201 (FLMWIMILLAVGYALLIA) form a helical membrane-spanning segment. At 202 to 206 (TPARP) the chain is on the extracellular side. A helical transmembrane segment spans residues 207–223 (LLALLSAAGIYLLFRYT). Over 224–702 (NRGSDAMVPK…GTTGGNPSPQ (479 aa)) the chain is Cytoplasmic. The Lon proteolytic domain occupies 487-667 (EEAVGRVNGL…SEVLDVALVG (181 aa)). Active-site residues include Ser-574 and Lys-617.

The protein belongs to the peptidase S16 family. Archaeal LonB subfamily. As to quaternary structure, homohexamer. Organized in a ring with a central cavity.

It localises to the cell membrane. Functionally, ATP-dependent serine protease that mediates the selective degradation of mutant and abnormal proteins as well as certain short-lived regulatory proteins. Degrades polypeptides processively. The sequence is that of Archaeal Lon protease from Halobacterium salinarum (strain ATCC 700922 / JCM 11081 / NRC-1) (Halobacterium halobium).